Consider the following 390-residue polypeptide: HIT domain-containing protein DDB_G0272839 (390 aa).

Positions 168–201 (DNENEKEKEKEMELDNDNTNTESIPPITSKSTST) are disordered. A compositionally biased stretch (low complexity) spans 184-201 (DNTNTESIPPITSKSTST). Residues 232–343 (YFCNKPESFL…ISNDYNTKYL (112 aa)) enclose the HIT domain.

This Dictyostelium discoideum (Social amoeba) protein is HIT domain-containing protein DDB_G0272839.